The chain runs to 280 residues: Shikimate dehydrogenase (NADP(+)) (280 aa).

Shikimate contacts are provided by residues 20 to 22 and Thr67; that span reads SLS. Catalysis depends on Lys71, which acts as the Proton acceptor. Residue Glu83 coordinates NADP(+). Residues Asn92 and Asp107 each contribute to the shikimate site. Residues 131-135, 155-160, and Leu224 contribute to the NADP(+) site; these read GAGGA and NRTLNK. Tyr226 is a binding site for shikimate. An NADP(+)-binding site is contributed by Gly247.

This sequence belongs to the shikimate dehydrogenase family. Homodimer.

It catalyses the reaction shikimate + NADP(+) = 3-dehydroshikimate + NADPH + H(+). It functions in the pathway metabolic intermediate biosynthesis; chorismate biosynthesis; chorismate from D-erythrose 4-phosphate and phosphoenolpyruvate: step 4/7. Involved in the biosynthesis of the chorismate, which leads to the biosynthesis of aromatic amino acids. Catalyzes the reversible NADPH linked reduction of 3-dehydroshikimate (DHSA) to yield shikimate (SA). This chain is Shikimate dehydrogenase (NADP(+)), found in Caldanaerobacter subterraneus subsp. tengcongensis (strain DSM 15242 / JCM 11007 / NBRC 100824 / MB4) (Thermoanaerobacter tengcongensis).